Consider the following 60-residue polypeptide: Ribosome modulation factor (60 aa).

The protein belongs to the ribosome modulation factor family.

It is found in the cytoplasm. In terms of biological role, during stationary phase, converts 70S ribosomes to an inactive dimeric form (100S ribosomes). The polypeptide is Ribosome modulation factor (Kangiella koreensis (strain DSM 16069 / JCM 12317 / KCTC 12182 / SW-125)).